We begin with the raw amino-acid sequence, 618 residues long: Dihydroxy-acid dehydratase (618 aa).

Aspartate 81 lines the Mg(2+) pocket. Cysteine 122 serves as a coordination point for [2Fe-2S] cluster. Residues aspartate 123 and lysine 124 each contribute to the Mg(2+) site. Lysine 124 is modified (N6-carboxylysine). Residue cysteine 195 participates in [2Fe-2S] cluster binding. Glutamate 491 provides a ligand contact to Mg(2+). Serine 517 functions as the Proton acceptor in the catalytic mechanism.

It belongs to the IlvD/Edd family. In terms of assembly, homodimer. The cofactor is [2Fe-2S] cluster. It depends on Mg(2+) as a cofactor.

The enzyme catalyses (2R)-2,3-dihydroxy-3-methylbutanoate = 3-methyl-2-oxobutanoate + H2O. It catalyses the reaction (2R,3R)-2,3-dihydroxy-3-methylpentanoate = (S)-3-methyl-2-oxopentanoate + H2O. It functions in the pathway amino-acid biosynthesis; L-isoleucine biosynthesis; L-isoleucine from 2-oxobutanoate: step 3/4. The protein operates within amino-acid biosynthesis; L-valine biosynthesis; L-valine from pyruvate: step 3/4. In terms of biological role, functions in the biosynthesis of branched-chain amino acids. Catalyzes the dehydration of (2R,3R)-2,3-dihydroxy-3-methylpentanoate (2,3-dihydroxy-3-methylvalerate) into 2-oxo-3-methylpentanoate (2-oxo-3-methylvalerate) and of (2R)-2,3-dihydroxy-3-methylbutanoate (2,3-dihydroxyisovalerate) into 2-oxo-3-methylbutanoate (2-oxoisovalerate), the penultimate precursor to L-isoleucine and L-valine, respectively. This Rhodopseudomonas palustris (strain TIE-1) protein is Dihydroxy-acid dehydratase.